The following is a 527-amino-acid chain: Cytochrome P450 monooygenase 3 (527 aa).

A helical membrane pass occupies residues 21-41; sequence IAVAFAALCGATGLLAFSWWI. Residue cysteine 473 participates in heme binding.

This sequence belongs to the cytochrome P450 family. The cofactor is heme.

The protein localises to the membrane. It functions in the pathway plant hormone biosynthesis; gibberellin biosynthesis. Its function is as follows. Gibberellin 13-hydroxylase; part of the gene cluster that mediates the biosynthesis of gibberellins (GAs), diterpenoids that may provide a selective advantage during infection of the preferred host plant, rice. Gibberellins (GAs) are diterpenoids and are synthesized via the mevalonate pathway. Biosynthesis of the major metabolite GA3 (gibberellic acid) from geranylgeranyl diphosphate (GGPP) requires 13 steps. The GGPP produced by the geranylgeranyl diphosphate synthase GGS2 is converted to ent-kaurene via ent-copalyldiphosphate in a two-step cyclization reaction performed by the bifunctional ent-copalyl diphosphate synthase/ent-kaurene synthase enzyme (CPS/KS). Ent-Kaurene is metabolized to GAs by a series of oxidation reactions catalyzed by cytochrome P450 monooxygenases. Cytochrome P450 monooxygenase P450-4 is an ent-kaurene oxidase that catalyzes the three oxidation steps between ent-kaurene and ent-kaurenoic acid. The highly multifunctional cytochrome P450 monooxygenase P450-1 then catalyzes four steps involving oxidation at two carbon atoms, in the main pathway from ent-kaurenoic acid to GA14 via GA12-aldehyde as well as producing kaurenolides and fujenoic acids as by-products. The cytochrome P450 monooxygenase P450-2 then converts GA14 to GA4 by removal of C-20. GA4 is further converted to GA7 by the GA4 desaturase DES via 1,2-desaturation before cytochrome P450 monooxygenase P450-3, a 13-hydroxylase, hydroxylates GA7 to GA3, the final product of the GA-biosynthetic pathway. This is Cytochrome P450 monooygenase 3 from Gibberella fujikuroi (strain CBS 195.34 / IMI 58289 / NRRL A-6831) (Bakanae and foot rot disease fungus).